The sequence spans 111 residues: Urease subunit beta (111 aa).

The protein belongs to the urease beta subunit family. As to quaternary structure, heterotrimer of UreA (gamma), UreB (beta) and UreC (alpha) subunits. Three heterotrimers associate to form the active enzyme.

The protein localises to the cytoplasm. The catalysed reaction is urea + 2 H2O + H(+) = hydrogencarbonate + 2 NH4(+). Its pathway is nitrogen metabolism; urea degradation; CO(2) and NH(3) from urea (urease route): step 1/1. This chain is Urease subunit beta, found in Geobacillus kaustophilus (strain HTA426).